A 294-amino-acid polypeptide reads, in one-letter code: MVVLDGKKLSQEIKAELKTKVEQYKQEIQKVPGLTVIIVGEDPASQVYVRNKAKSCNEIGMASEVIELPASTSQEELLKKIADLNHNPNVHGILVQQPLPKHIDEFAVTLAIAPEKDVDGFHPENVGRLVLGHLDKCFVSCTPFGIIEILKRYNIETKGKHCVIVGRSNIVGKPMANLMVQKLAYMNCTVTVCHSATPDIATYTKQADILIAAIGKARFITGDMIKAGAVVIDVGINRIEATNTKSGYRLVGDVDFEAASQKASAITPVPGGVGPMTISMLLANTMKSFEHFLA.

NADP(+) contacts are provided by residues glycine 166–serine 168, serine 195, and isoleucine 236.

It belongs to the tetrahydrofolate dehydrogenase/cyclohydrolase family. Homodimer.

It catalyses the reaction (6R)-5,10-methylene-5,6,7,8-tetrahydrofolate + NADP(+) = (6R)-5,10-methenyltetrahydrofolate + NADPH. It carries out the reaction (6R)-5,10-methenyltetrahydrofolate + H2O = (6R)-10-formyltetrahydrofolate + H(+). It functions in the pathway one-carbon metabolism; tetrahydrofolate interconversion. In terms of biological role, catalyzes the oxidation of 5,10-methylenetetrahydrofolate to 5,10-methenyltetrahydrofolate and then the hydrolysis of 5,10-methenyltetrahydrofolate to 10-formyltetrahydrofolate. This Chloroherpeton thalassium (strain ATCC 35110 / GB-78) protein is Bifunctional protein FolD.